The following is a 507-amino-acid chain: Probable cytosol aminopeptidase (507 aa).

Lysine 275 and aspartate 280 together coordinate Mn(2+). Lysine 287 is a catalytic residue. The Mn(2+) site is built by aspartate 298, aspartate 357, and glutamate 359. Arginine 361 is an active-site residue.

The protein belongs to the peptidase M17 family. Mn(2+) serves as cofactor.

The protein localises to the cytoplasm. The catalysed reaction is Release of an N-terminal amino acid, Xaa-|-Yaa-, in which Xaa is preferably Leu, but may be other amino acids including Pro although not Arg or Lys, and Yaa may be Pro. Amino acid amides and methyl esters are also readily hydrolyzed, but rates on arylamides are exceedingly low.. It catalyses the reaction Release of an N-terminal amino acid, preferentially leucine, but not glutamic or aspartic acids.. Presumably involved in the processing and regular turnover of intracellular proteins. Catalyzes the removal of unsubstituted N-terminal amino acids from various peptides. The sequence is that of Probable cytosol aminopeptidase from Rhodopirellula baltica (strain DSM 10527 / NCIMB 13988 / SH1).